Here is a 379-residue protein sequence, read N- to C-terminus: Queuine tRNA-ribosyltransferase (379 aa).

Residue D94 is the Proton acceptor of the active site. Substrate is bound by residues 94-98 (DSGGF), D148, Q191, and G218. The RNA binding stretch occupies residues 249-255 (GVGSPDS). The Nucleophile role is filled by D268. An RNA binding; important for wobble base 34 recognition region spans residues 273–277 (TRIAR). The Zn(2+) site is built by C306, C308, C311, and H337.

The protein belongs to the queuine tRNA-ribosyltransferase family. In terms of assembly, homodimer. Within each dimer, one monomer is responsible for RNA recognition and catalysis, while the other monomer binds to the replacement base PreQ1. Zn(2+) is required as a cofactor.

The catalysed reaction is 7-aminomethyl-7-carbaguanine + guanosine(34) in tRNA = 7-aminomethyl-7-carbaguanosine(34) in tRNA + guanine. Its pathway is tRNA modification; tRNA-queuosine biosynthesis. Functionally, catalyzes the base-exchange of a guanine (G) residue with the queuine precursor 7-aminomethyl-7-deazaguanine (PreQ1) at position 34 (anticodon wobble position) in tRNAs with GU(N) anticodons (tRNA-Asp, -Asn, -His and -Tyr). Catalysis occurs through a double-displacement mechanism. The nucleophile active site attacks the C1' of nucleotide 34 to detach the guanine base from the RNA, forming a covalent enzyme-RNA intermediate. The proton acceptor active site deprotonates the incoming PreQ1, allowing a nucleophilic attack on the C1' of the ribose to form the product. After dissociation, two additional enzymatic reactions on the tRNA convert PreQ1 to queuine (Q), resulting in the hypermodified nucleoside queuosine (7-(((4,5-cis-dihydroxy-2-cyclopenten-1-yl)amino)methyl)-7-deazaguanosine). The polypeptide is Queuine tRNA-ribosyltransferase (Bacillus mycoides (strain KBAB4) (Bacillus weihenstephanensis)).